The chain runs to 251 residues: tRNA-cytidine(32) 2-sulfurtransferase 2 (251 aa).

The PP-loop motif motif lies at 33-38 (SGGKDS). [4Fe-4S] cluster is bound by residues Cys-108, Cys-111, and Cys-199.

This sequence belongs to the TtcA family. In terms of assembly, homodimer. Mg(2+) is required as a cofactor. Requires [4Fe-4S] cluster as cofactor.

It is found in the cytoplasm. It carries out the reaction cytidine(32) in tRNA + S-sulfanyl-L-cysteinyl-[cysteine desulfurase] + AH2 + ATP = 2-thiocytidine(32) in tRNA + L-cysteinyl-[cysteine desulfurase] + A + AMP + diphosphate + H(+). It functions in the pathway tRNA modification. Its function is as follows. Catalyzes the ATP-dependent 2-thiolation of cytidine in position 32 of tRNA, to form 2-thiocytidine (s(2)C32). The sulfur atoms are provided by the cysteine/cysteine desulfurase (IscS) system. In Francisella tularensis subsp. tularensis (strain WY96-3418), this protein is tRNA-cytidine(32) 2-sulfurtransferase 2.